The following is a 259-amino-acid chain: Type III pantothenate kinase (259 aa).

6-13 (DAGNTNIV) is a binding site for ATP. Substrate-binding positions include Tyr100 and 107–110 (GADR). The active-site Proton acceptor is the Asp109. Asp129 provides a ligand contact to K(+). An ATP-binding site is contributed by Thr132. Thr184 lines the substrate pocket.

This sequence belongs to the type III pantothenate kinase family. As to quaternary structure, homodimer. It depends on NH4(+) as a cofactor. K(+) is required as a cofactor.

It is found in the cytoplasm. The catalysed reaction is (R)-pantothenate + ATP = (R)-4'-phosphopantothenate + ADP + H(+). Its pathway is cofactor biosynthesis; coenzyme A biosynthesis; CoA from (R)-pantothenate: step 1/5. Its function is as follows. Catalyzes the phosphorylation of pantothenate (Pan), the first step in CoA biosynthesis. The polypeptide is Type III pantothenate kinase (Clostridium novyi (strain NT)).